Reading from the N-terminus, the 355-residue chain is Ubiquinone biosynthesis protein COQ4 homolog, mitochondrial (355 aa).

The Zn(2+) site is built by His134, Asp135, His138, and Glu150.

Belongs to the COQ4 family. In terms of assembly, component of a multi-subunit COQ enzyme complex. Requires Zn(2+) as cofactor.

It is found in the mitochondrion inner membrane. It catalyses the reaction a 4-hydroxy-3-methoxy-5-(all-trans-polyprenyl)benzoate + H(+) = a 2-methoxy-6-(all-trans-polyprenyl)phenol + CO2. Its pathway is cofactor biosynthesis; ubiquinone biosynthesis. Its function is as follows. Lyase that catalyzes the C1-decarboxylation of 4-hydroxy-3-methoxy-5-(all-trans-polyprenyl)benzoic acid into 2-methoxy-6-(all-trans-polyprenyl)phenol during ubiquinone biosynthesis. This chain is Ubiquinone biosynthesis protein COQ4 homolog, mitochondrial, found in Plasmodium vivax (strain Salvador I).